Reading from the N-terminus, the 478-residue chain is MKNVLLIASEAVPFIKTGGLADVAGSLPKYFDKTKFDVRVMIPKYTCIPWEYREKMVYKTHFYIDLAWRTQYVGVFELEWNGVTFYFIDNEFYFGGNKPYSWIHEDIEKFAFFSKAALSALPVLGFRPDIIHCNDWQTGLIPVYLKERFSQGEFYQGIKSIMTIHNLKFQGIWDLKKVKDITGLPDEYFTSDKLEAYDDANYLKGGIVYADRVTTVSETYAEEIKTPFYGENLDGLMRARSNVLSGIVNGIDYDEYNPETDKRIPNNYNQVTFRKEKWKNKVALQKELGLTEDKGKFMIGLVSRLTDQKGLDLVAYVMDQLCAEDVQFVVLGTGEERYENMFRHYDWKYNDRVSANIYYSEDMSHKIYAACDAFLMPSLFEPCGLSQLMSLRYGTVPIVRETGGLKDTVEPYNEYEGKGTGFSFANYNAHEMLGIVNYAKDVYYNHKREWNKIVDRGMKTDFSWNSSARKYEELYNSL.

Lysine 16 contributes to the ADP-alpha-D-glucose binding site.

Belongs to the glycosyltransferase 1 family. Bacterial/plant glycogen synthase subfamily.

The catalysed reaction is [(1-&gt;4)-alpha-D-glucosyl](n) + ADP-alpha-D-glucose = [(1-&gt;4)-alpha-D-glucosyl](n+1) + ADP + H(+). The protein operates within glycan biosynthesis; glycogen biosynthesis. In terms of biological role, synthesizes alpha-1,4-glucan chains using ADP-glucose. The sequence is that of Glycogen synthase from Lachnospira eligens (strain ATCC 27750 / DSM 3376 / VPI C15-48 / C15-B4) (Eubacterium eligens).